Reading from the N-terminus, the 825-residue chain is Taste receptor cell protein 1 (825 aa).

The first 21 residues, 1-21 (MDKQWFPAAGILLAALLVVSA), serve as a signal peptide directing secretion. Disordered stretches follow at residues 66–97 (EREPEALGRRAGGLSTEGAGGQESPSMPGPSG) and 299–322 (TSPSQASSLHSPRPSSASPLSASP). Residues 302–322 (SQASSLHSPRPSSASPLSASP) show a composition bias toward low complexity.

As to expression, expression is restricted to circumvallate papillae.

This is Taste receptor cell protein 1 (Trcg1) from Mus musculus (Mouse).